The sequence spans 289 residues: 4-diphosphocytidyl-2-C-methyl-D-erythritol kinase (289 aa).

The active site involves Lys11. 96–106 (PVAAGIGGGSS) serves as a coordination point for ATP. Residue Asp138 is part of the active site.

Belongs to the GHMP kinase family. IspE subfamily.

It carries out the reaction 4-CDP-2-C-methyl-D-erythritol + ATP = 4-CDP-2-C-methyl-D-erythritol 2-phosphate + ADP + H(+). The protein operates within isoprenoid biosynthesis; isopentenyl diphosphate biosynthesis via DXP pathway; isopentenyl diphosphate from 1-deoxy-D-xylulose 5-phosphate: step 3/6. Functionally, catalyzes the phosphorylation of the position 2 hydroxy group of 4-diphosphocytidyl-2C-methyl-D-erythritol. This is 4-diphosphocytidyl-2-C-methyl-D-erythritol kinase from Azorhizobium caulinodans (strain ATCC 43989 / DSM 5975 / JCM 20966 / LMG 6465 / NBRC 14845 / NCIMB 13405 / ORS 571).